Here is a 49-residue protein sequence, read N- to C-terminus: Large ribosomal subunit protein bL33 (49 aa).

The protein belongs to the bacterial ribosomal protein bL33 family.

This is Large ribosomal subunit protein bL33 from Nitratidesulfovibrio vulgaris (strain ATCC 29579 / DSM 644 / CCUG 34227 / NCIMB 8303 / VKM B-1760 / Hildenborough) (Desulfovibrio vulgaris).